A 476-amino-acid polypeptide reads, in one-letter code: Light-independent protochlorophyllide reductase subunit N (476 aa).

[4Fe-4S] cluster is bound by residues cysteine 31, cysteine 56, and cysteine 116.

The protein belongs to the BchN/ChlN family. Protochlorophyllide reductase is composed of three subunits; ChlL, ChlN and ChlB. Forms a heterotetramer of two ChlB and two ChlN subunits. Requires [4Fe-4S] cluster as cofactor.

It localises to the plastid. It is found in the chloroplast. The catalysed reaction is chlorophyllide a + oxidized 2[4Fe-4S]-[ferredoxin] + 2 ADP + 2 phosphate = protochlorophyllide a + reduced 2[4Fe-4S]-[ferredoxin] + 2 ATP + 2 H2O. Its pathway is porphyrin-containing compound metabolism; chlorophyll biosynthesis (light-independent). Its function is as follows. Component of the dark-operative protochlorophyllide reductase (DPOR) that uses Mg-ATP and reduced ferredoxin to reduce ring D of protochlorophyllide (Pchlide) to form chlorophyllide a (Chlide). This reaction is light-independent. The NB-protein (ChlN-ChlB) is the catalytic component of the complex. This chain is Light-independent protochlorophyllide reductase subunit N, found in Staurastrum punctulatum (Green alga).